The chain runs to 202 residues: Imidazoleglycerol-phosphate dehydratase (202 aa).

This sequence belongs to the imidazoleglycerol-phosphate dehydratase family.

It is found in the cytoplasm. It carries out the reaction D-erythro-1-(imidazol-4-yl)glycerol 3-phosphate = 3-(imidazol-4-yl)-2-oxopropyl phosphate + H2O. It functions in the pathway amino-acid biosynthesis; L-histidine biosynthesis; L-histidine from 5-phospho-alpha-D-ribose 1-diphosphate: step 6/9. This chain is Imidazoleglycerol-phosphate dehydratase, found in Sinorhizobium fredii (strain NBRC 101917 / NGR234).